The sequence spans 583 residues: MEDISEIFDIYAICACCKVLNSNEKAGCFSNKTFKGLGNEGGLPWKCNSVDMKHFSSVTSYVNETNYMRLKWKRDRYMEKNNVKLNTDGIPSVDKLQNIVVMGKASWESIPSKFKPLQNRINIILSRTLKKEDLAKEYNNVIIINSVDDLFPILKCIKYYKCFIIGGASVYKEFLDRNLIKKIYFTRINNAYTCDVLFPDINEDLFKITSISDVYSSNNTTLDFVIYSKTKEIHEEINPNDELFNNTFLGVCDEKNTNFDDEDDYTYFSFNKHKDNIKKNSEHAHHFKIYNSIKYKHHPEYQYLNIIYDIIMHGNKQDDRTGVGVLSKFGYMMKFNLSEYFPLLTTKKLFVRGIIEELLWFIRGETNGNTLLEKNVRIWEANGTREFLDNRKLFHREVNDLGPIYGFQWRHFGAEYTDMHADYKDKGVDQLKNIINLIKNDPTCRRIILCAWNVKDLDQMALPPCHILCQFYVFDGKLSCIMYQRSCDLGLGVPFNIASYSIFTYMIAQVCNLQPAEFIHVLGNAHVYNNHVESLKVQLNRTPYPFPTLKLNPEIKNIEDFTISDFTVQNYVHHDKISMDMAA.

The region spanning 9 to 229 is the DHFR domain; sequence DIYAICACCK…TTLDFVIYSK (221 aa). Position 36-42 (36-42) interacts with NADP(+); that stretch reads GLGNEGG. Asp-51 contacts substrate. NADP(+)-binding positions include 104–106 and 125–128; these read KAS and LSRT. Substrate-binding residues include Ile-165, Tyr-171, and Thr-186. 166 to 173 contributes to the NADP(+) binding site; it reads GGASVYKE. The interval 298 to 583 is thymidylate synthase; sequence HPEYQYLNII…HDKISMDMAA (286 aa). Arg-320 contacts dUMP. Cys-465 is a catalytic residue. Residues His-466, 484 to 488, Asn-496, and 526 to 528 contribute to the dUMP site; these read QRSCD and HVY.

It in the N-terminal section; belongs to the dihydrofolate reductase family. In the C-terminal section; belongs to the thymidylate synthase family. As to quaternary structure, homodimer.

It catalyses the reaction (6S)-5,6,7,8-tetrahydrofolate + NADP(+) = 7,8-dihydrofolate + NADPH + H(+). The enzyme catalyses dUMP + (6R)-5,10-methylene-5,6,7,8-tetrahydrofolate = 7,8-dihydrofolate + dTMP. It participates in cofactor biosynthesis; tetrahydrofolate biosynthesis; 5,6,7,8-tetrahydrofolate from 7,8-dihydrofolate: step 1/1. In terms of biological role, bifunctional enzyme. Involved in de novo dTMP biosynthesis. Key enzyme in folate metabolism. Catalyzes an essential reaction for de novo glycine and purine synthesis, DNA precursor synthesis, and for the conversion of dUMP to dTMP. This chain is Bifunctional dihydrofolate reductase-thymidylate synthase, found in Plasmodium chabaudi.